The chain runs to 298 residues: tRNA-cytidine(32) 2-sulfurtransferase (298 aa).

The disordered stretch occupies residues M1 to D26. The PP-loop motif motif lies at S57–S62. [4Fe-4S] cluster-binding residues include C132, C135, and C223.

Belongs to the TtcA family. In terms of assembly, homodimer. The cofactor is Mg(2+). [4Fe-4S] cluster serves as cofactor.

It localises to the cytoplasm. It carries out the reaction cytidine(32) in tRNA + S-sulfanyl-L-cysteinyl-[cysteine desulfurase] + AH2 + ATP = 2-thiocytidine(32) in tRNA + L-cysteinyl-[cysteine desulfurase] + A + AMP + diphosphate + H(+). Its pathway is tRNA modification. Functionally, catalyzes the ATP-dependent 2-thiolation of cytidine in position 32 of tRNA, to form 2-thiocytidine (s(2)C32). The sulfur atoms are provided by the cysteine/cysteine desulfurase (IscS) system. This chain is tRNA-cytidine(32) 2-sulfurtransferase, found in Stenotrophomonas maltophilia (strain R551-3).